Reading from the N-terminus, the 172-residue chain is uncharacterized protein (172 aa).

The signal sequence occupies residues 1 to 29 (MKKKQVMLALTAAAGLGLTALHSAPAAKA). SH3b domains are found at residues 42–105 (SDTY…MKTA) and 112–172 (KQTA…LQMR).

This is an uncharacterized protein from Bacillus subtilis (strain 168).